The primary structure comprises 164 residues: Protein-export protein SecB (164 aa).

The protein belongs to the SecB family. As to quaternary structure, homotetramer, a dimer of dimers. One homotetramer interacts with 1 SecA dimer.

The protein resides in the cytoplasm. Functionally, one of the proteins required for the normal export of preproteins out of the cell cytoplasm. It is a molecular chaperone that binds to a subset of precursor proteins, maintaining them in a translocation-competent state. It also specifically binds to its receptor SecA. This chain is Protein-export protein SecB, found in Nitrosococcus oceani (strain ATCC 19707 / BCRC 17464 / JCM 30415 / NCIMB 11848 / C-107).